Consider the following 153-residue polypeptide: NADPH-dependent 7-cyano-7-deazaguanine reductase (153 aa).

Residues 1–30 form a disordered region; it reads MDSIETHAKQLGQQTPLPASPEAAQLDRVP. Cys-51 acts as the Thioimide intermediate in catalysis. The active-site Proton donor is Asp-58. Residues 73–75 and 92–93 contribute to the substrate site; these read VES and HE.

This sequence belongs to the GTP cyclohydrolase I family. QueF type 1 subfamily.

It localises to the cytoplasm. It catalyses the reaction 7-aminomethyl-7-carbaguanine + 2 NADP(+) = 7-cyano-7-deazaguanine + 2 NADPH + 3 H(+). Its pathway is tRNA modification; tRNA-queuosine biosynthesis. In terms of biological role, catalyzes the NADPH-dependent reduction of 7-cyano-7-deazaguanine (preQ0) to 7-aminomethyl-7-deazaguanine (preQ1). The protein is NADPH-dependent 7-cyano-7-deazaguanine reductase of Methylorubrum extorquens (strain CM4 / NCIMB 13688) (Methylobacterium extorquens).